Consider the following 326-residue polypeptide: MTRFARIIGTGSYLPPKRVTNDELAAQLAEKGIETSDEWIVSRSGIRARHFAEPDVTCSDLAVRAAERAIEAAGIDRSELDLILVATSTPDFVFPSTACLVQQKLGITNGCAAFDVQAVCSGFVYALATADKFIRSGAYRNVLVIGSEVFSRIIDFSDRTTCVLFGDGAGAVVLQASDEPGILSTALHADGSHANILCVPGNVAAGAIQGSAFLYMDGQAVFKLAVTVLDKVAREALAAAELDASQVDWLIPHQANIRIMQGTTKKLGLSNERLIVTVDEHGNTSAASIPLALDVAVRDGRIQRGQHVMLEGVGGGFTWGAALLRF.

Residues C120 and H253 contribute to the active site. Residues 254–258 (QANIR) form an ACP-binding region. The active site involves N283.

Belongs to the thiolase-like superfamily. FabH family. In terms of assembly, homodimer.

The protein localises to the cytoplasm. The catalysed reaction is malonyl-[ACP] + acetyl-CoA + H(+) = 3-oxobutanoyl-[ACP] + CO2 + CoA. Its pathway is lipid metabolism; fatty acid biosynthesis. Its function is as follows. Catalyzes the condensation reaction of fatty acid synthesis by the addition to an acyl acceptor of two carbons from malonyl-ACP. Catalyzes the first condensation reaction which initiates fatty acid synthesis and may therefore play a role in governing the total rate of fatty acid production. Possesses both acetoacetyl-ACP synthase and acetyl transacylase activities. Its substrate specificity determines the biosynthesis of branched-chain and/or straight-chain of fatty acids. The chain is Beta-ketoacyl-[acyl-carrier-protein] synthase III from Ralstonia pickettii (strain 12J).